A 407-amino-acid chain; its full sequence is Imidazolonepropionase (407 aa).

Fe(3+) contacts are provided by His-74 and His-76. Zn(2+) is bound by residues His-74 and His-76. Residues Arg-83, Tyr-146, and His-179 each coordinate 4-imidazolone-5-propanoate. Tyr-146 provides a ligand contact to N-formimidoyl-L-glutamate. Residue His-244 participates in Fe(3+) binding. Position 244 (His-244) interacts with Zn(2+). Gln-247 serves as a coordination point for 4-imidazolone-5-propanoate. Asp-319 is a Fe(3+) binding site. Asp-319 provides a ligand contact to Zn(2+). N-formimidoyl-L-glutamate-binding residues include Asn-321 and Gly-323. Thr-324 lines the 4-imidazolone-5-propanoate pocket.

The protein belongs to the metallo-dependent hydrolases superfamily. HutI family. The cofactor is Zn(2+). It depends on Fe(3+) as a cofactor.

The protein resides in the cytoplasm. It catalyses the reaction 4-imidazolone-5-propanoate + H2O = N-formimidoyl-L-glutamate. The protein operates within amino-acid degradation; L-histidine degradation into L-glutamate; N-formimidoyl-L-glutamate from L-histidine: step 3/3. Functionally, catalyzes the hydrolytic cleavage of the carbon-nitrogen bond in imidazolone-5-propanoate to yield N-formimidoyl-L-glutamate. It is the third step in the universal histidine degradation pathway. In Salmonella agona (strain SL483), this protein is Imidazolonepropionase.